The following is a 240-amino-acid chain: Acyl-protein thioesterase 1 (240 aa).

Catalysis depends on charge relay system residues S129, D183, and H219.

Belongs to the AB hydrolase superfamily. AB hydrolase 2 family.

The protein localises to the cytoplasm. It is found in the nucleus. It carries out the reaction S-hexadecanoyl-L-cysteinyl-[protein] + H2O = L-cysteinyl-[protein] + hexadecanoate + H(+). Its function is as follows. Hydrolyzes fatty acids from S-acylated cysteine residues in proteins with a strong preference for palmitoylated G-alpha proteins over other acyl substrates. Mediates the deacylation of G-alpha proteins such as GPA1 in vivo, but has weak or no activity toward palmitoylated Ras proteins. Has weak lysophospholipase activity in vitro; however such activity may not exist in vivo. The protein is Acyl-protein thioesterase 1 of Mycosarcoma maydis (Corn smut fungus).